We begin with the raw amino-acid sequence, 366 residues long: Autoinducer 2-binding periplasmic protein LuxP (366 aa).

The signal sequence occupies residues 1–13 (MKKILLTCLLASA).

Belongs to the bacterial solute-binding protein 2 family.

It is found in the periplasm. Its function is as follows. Binds to an autoinducer molecule. This complex then interacts with the LuxQ sensor protein. The sequence is that of Autoinducer 2-binding periplasmic protein LuxP (luxP) from Vibrio vulnificus (strain CMCP6).